Here is a 506-residue protein sequence, read N- to C-terminus: ATP-dependent rRNA helicase RRP3 (506 aa).

2 disordered regions span residues 1–22 and 37–88; these read MSGKVDKKKGSSVKKTEGKSKE and NQKK…FESF. Over residues 49–69 the composition is skewed to acidic residues; sequence SDQEDDPSESEEEEGSDSEDV. Positions 86 to 114 match the Q motif motif; sequence ESFSDLDLVPELIEACKNLNFAKPTPIQA. The Helicase ATP-binding domain maps to 117–289; it reads IPPALQGHDI…RASLTNPVKC (173 aa). Position 130-137 (130-137) interacts with ATP; the sequence is AQTGSGKT. A DEAD box motif is present at residues 236 to 239; the sequence is DEAD. Residues 312-460 form the Helicase C-terminal domain; sequence LKNTYLIYLM…KENVNKDAIL (149 aa). The disordered stretch occupies residues 485–506; sequence IARGKGRRGRMAARDDMDKGER. The span at 496–506 shows a compositional bias: basic and acidic residues; the sequence is AARDDMDKGER.

Belongs to the DEAD box helicase family. DDX47/RRP3 subfamily. Interacts with the SSU processome.

It is found in the nucleus. It carries out the reaction ATP + H2O = ADP + phosphate + H(+). Its function is as follows. ATP-dependent rRNA helicase required for pre-ribosomal RNA processing. Involved in the maturation of the 35S-pre-rRNA and to its cleavage to mature 18S rRNA. The chain is ATP-dependent rRNA helicase RRP3 from Vanderwaltozyma polyspora (strain ATCC 22028 / DSM 70294 / BCRC 21397 / CBS 2163 / NBRC 10782 / NRRL Y-8283 / UCD 57-17) (Kluyveromyces polysporus).